A 691-amino-acid polypeptide reads, in one-letter code: CREB-regulated transcription coactivator 2 (691 aa).

A compositionally biased stretch (polar residues) spans 1–20 (MATSGANGPGSATASASNPR). Residues 1–30 (MATSGANGPGSATASASNPRKFSEKIALQK) are disordered. At alanine 2 the chain carries N-acetylalanine. Arginine 51 carries the post-translational modification Asymmetric dimethylarginine; by PRMT6. Phosphoserine is present on residues serine 70, serine 86, and serine 90. Arginine 99, arginine 120, and arginine 123 each carry asymmetric dimethylarginine; by PRMT6. Serine 136 is modified (phosphoserine). Asymmetric dimethylarginine; by PRMT6 occurs at positions 161 and 168. Phosphothreonine is present on threonine 169. Serine 171 bears the Phosphoserine; by AMPK, MARK2, SIK1 and SIK2 mark. Over residues 174-186 (ALHTSVMNPNPQD) the composition is skewed to polar residues. Residues 174–195 (ALHTSVMNPNPQDTYPGPTPPS) form a disordered region. Threonine 192 bears the Phosphothreonine mark. Residue lysine 234 forms a Glycyl lysine isopeptide (Lys-Gly) (interchain with G-Cter in SUMO2) linkage. Residues 271–287 (TGGSLPDLTNLHFPPPL) carry the Nuclear export signal motif. Serine 274 is modified (phosphoserine; by MARK2). 2 disordered regions span residues 280 to 306 (NLHFPPPLPTPLDPEETVYPSLSGGNS) and 335 to 491 (HSPL…YSPP). A phosphoserine mark is found at serine 306, serine 368, serine 393, serine 433, and serine 456. Low complexity-rich tracts occupy residues 335–383 (HSPL…HALP) and 390–411 (PSLSAPALSSSSSSSSTSSPVL). Over residues 447 to 468 (SQQQLPKQFSPTMSPTLSSITQ) the composition is skewed to polar residues. Phosphotyrosine is present on tyrosine 488. 2 positions are modified to phosphoserine: serine 489 and serine 492. Threonine 501 is subject to Phosphothreonine. The disordered stretch occupies residues 513-543 (CLVQPSGGQPPGRQPHYGTLYPPGSSGHGQQ). Serine 611, serine 621, and serine 622 each carry phosphoserine.

It belongs to the TORC family. In terms of assembly, binds, as a tetramer, through its N-terminal region, with the bZIP domain of CREB1. 'Arg-314' in the bZIP domain of CREB1 is essential for this interaction. Interaction, via its C-terminal, with TAF4, enhances recruitment of TAF4 to CREB1. Interacts with SIK2. Interacts with 14-3-3 proteins, YWHAB and YWHAG. Interacts (probably when phosphorylated at Ser-171) with YWHAE. Interacts with calmodulin-dependent catalytic subunit PPP3CA/calcineurin A. Interaction with COP1 mediates nuclear export and degradation of CRTC2. In terms of processing, phosphorylation/dephosphorylation states of Ser-171 are required for regulating transduction of CREB activity. CRTCs/TORCs are inactive when phosphorylated, and active when dephosphorylated at this site. This primary site of phosphorylation, is regulated by cAMP and calcium levels and is dependent on the phosphorylation of SIKs (SIK1 and SIK2) by LKB1. Following adenylyl cyclase activation, dephosphorylated at Ser-171 by PPP3CA/calcineurin A resulting in CRTC2 dissociation from 14-3-3 proteins and PPP3CA. Both insulin and AMPK increase this phosphorylation of CRTC2 while glucagon suppresses it. Phosphorylation at Ser-274 by MARK2 is induced under low glucose conditions and dephosphorylated in response to glucose influx. Phosphorylation at Ser-274 promotes interaction with 14-3-3 proteins and translocation to the cytoplasm. Asymmetric dimethylation of arginine resisues by PRMT6 enhances the association of CRTC2 with CREB on the promoters of gluconeogenic genes.

Its subcellular location is the cytoplasm. It localises to the nucleus. Transcriptional coactivator for CREB1 which activates transcription through both consensus and variant cAMP response element (CRE) sites. Acts as a coactivator, in the SIK/TORC signaling pathway, being active when dephosphorylated and acts independently of CREB1 'Ser-133' phosphorylation. Enhances the interaction of CREB1 with TAF4. Regulates gluconeogenesis as a component of the LKB1/AMPK/TORC2 signaling pathway. Regulates the expression of specific genes such as the steroidogenic gene, StAR. Potent coactivator of PPARGC1A and inducer of mitochondrial biogenesis in muscle cells. The polypeptide is CREB-regulated transcription coactivator 2 (Crtc2) (Rattus norvegicus (Rat)).